We begin with the raw amino-acid sequence, 314 residues long: Homoserine O-succinyltransferase (314 aa).

Catalysis depends on C142, which acts as the Acyl-thioester intermediate. Residues K163 and S192 each contribute to the substrate site. Residue H235 is the Proton acceptor of the active site. Residue E237 is part of the active site. R249 serves as a coordination point for substrate.

The protein belongs to the MetA family.

The protein localises to the cytoplasm. It carries out the reaction L-homoserine + succinyl-CoA = O-succinyl-L-homoserine + CoA. The protein operates within amino-acid biosynthesis; L-methionine biosynthesis via de novo pathway; O-succinyl-L-homoserine from L-homoserine: step 1/1. Functionally, transfers a succinyl group from succinyl-CoA to L-homoserine, forming succinyl-L-homoserine. This is Homoserine O-succinyltransferase from Shewanella frigidimarina (strain NCIMB 400).